Here is a 211-residue protein sequence, read N- to C-terminus: MTGVFITLEGGDGVGKSTQSALLRGWLEDEGHEVVVTREPGGSELGVEIREIVLHRRGHIAPRAEALLYAADRAHHVETVVRPALDRGAVVLQDRYLDSSVAYQGAGRVLDAGEIRELSLWAAQGLLPDLTVLLDLDQAAARVRLDAARTRFDRLESERADFHERVRQAFLGLAGAEPERFLVVDAARPREEIAAAIRTRAQALIAAGASA.

10 to 17 (GGDGVGKS) contacts ATP.

It belongs to the thymidylate kinase family.

It catalyses the reaction dTMP + ATP = dTDP + ADP. Functionally, phosphorylation of dTMP to form dTDP in both de novo and salvage pathways of dTTP synthesis. The protein is Thymidylate kinase of Clavibacter michiganensis subsp. michiganensis (strain NCPPB 382).